The following is a 126-amino-acid chain: Holo-[acyl-carrier-protein] synthase (126 aa).

Residues D9 and E58 each coordinate Mg(2+).

Belongs to the P-Pant transferase superfamily. AcpS family. Mg(2+) serves as cofactor.

The protein resides in the cytoplasm. It carries out the reaction apo-[ACP] + CoA = holo-[ACP] + adenosine 3',5'-bisphosphate + H(+). Its function is as follows. Transfers the 4'-phosphopantetheine moiety from coenzyme A to a Ser of acyl-carrier-protein. The polypeptide is Holo-[acyl-carrier-protein] synthase (Buchnera aphidicola subsp. Schizaphis graminum (strain Sg)).